The following is a 370-amino-acid chain: 4-hydroxy-3-methylbut-2-en-1-yl diphosphate synthase (flavodoxin) (370 aa).

C268, C271, C303, and E310 together coordinate [4Fe-4S] cluster.

It belongs to the IspG family. Requires [4Fe-4S] cluster as cofactor.

The enzyme catalyses (2E)-4-hydroxy-3-methylbut-2-enyl diphosphate + oxidized [flavodoxin] + H2O + 2 H(+) = 2-C-methyl-D-erythritol 2,4-cyclic diphosphate + reduced [flavodoxin]. It functions in the pathway isoprenoid biosynthesis; isopentenyl diphosphate biosynthesis via DXP pathway; isopentenyl diphosphate from 1-deoxy-D-xylulose 5-phosphate: step 5/6. In terms of biological role, converts 2C-methyl-D-erythritol 2,4-cyclodiphosphate (ME-2,4cPP) into 1-hydroxy-2-methyl-2-(E)-butenyl 4-diphosphate. The protein is 4-hydroxy-3-methylbut-2-en-1-yl diphosphate synthase (flavodoxin) of Bacillus anthracis (strain A0248).